We begin with the raw amino-acid sequence, 179 residues long: Large ribosomal subunit protein uL5 (179 aa).

Belongs to the universal ribosomal protein uL5 family. In terms of assembly, part of the 50S ribosomal subunit; part of the 5S rRNA/L5/L18/L25 subcomplex. Contacts the 5S rRNA and the P site tRNA. Forms a bridge to the 30S subunit in the 70S ribosome.

In terms of biological role, this is one of the proteins that bind and probably mediate the attachment of the 5S RNA into the large ribosomal subunit, where it forms part of the central protuberance. In the 70S ribosome it contacts protein S13 of the 30S subunit (bridge B1b), connecting the 2 subunits; this bridge is implicated in subunit movement. Contacts the P site tRNA; the 5S rRNA and some of its associated proteins might help stabilize positioning of ribosome-bound tRNAs. This Tolumonas auensis (strain DSM 9187 / NBRC 110442 / TA 4) protein is Large ribosomal subunit protein uL5.